The sequence spans 879 residues: DNA double-strand break repair Rad50 ATPase (879 aa).

Residues 32-38 (NGAGKSS) and Gln139 each bind ATP. Coiled coils occupy residues 184–304 (IELQ…NKIK) and 342–436 (EIKG…NQVK). Residues 394–492 (LQKLNEDLNN…LISELNQIIN (99 aa)) form the Zinc-hook domain. Positions 440 and 443 each coordinate Zn(2+). Residues 502 to 722 (IRNLADYNNL…LITAYDKLKK (221 aa)) are a coiled coil. An ATP-binding site is contributed by 786–791 (LLSGGE).

The protein belongs to the SMC family. RAD50 subfamily. As to quaternary structure, homodimer. Forms a heterotetramer composed of two Mre11 subunits and two Rad50 subunits. Zn(2+) is required as a cofactor.

Part of the Rad50/Mre11 complex, which is involved in the early steps of DNA double-strand break (DSB) repair. The complex may facilitate opening of the processed DNA ends to aid in the recruitment of HerA and NurA. Rad50 controls the balance between DNA end bridging and DNA resection via ATP-dependent structural rearrangements of the Rad50/Mre11 complex. This Sulfurisphaera tokodaii (strain DSM 16993 / JCM 10545 / NBRC 100140 / 7) (Sulfolobus tokodaii) protein is DNA double-strand break repair Rad50 ATPase.